A 1885-amino-acid polypeptide reads, in one-letter code: Chitin synthase 5 (1885 aa).

The Myosin motor domain occupies 1–789 (MATRGNVPAH…SIALTGSQAA (789 aa)). 99-106 (GESGSGKT) provides a ligand contact to ATP. N-linked (GlcNAc...) asparagine glycosylation is found at asparagine 219 and asparagine 429. Residues 601–649 (KPLRMPSVSRKKHDQLRRMASRRADRSPAPQEEEPLPGTEEAKVRRTKP) are disordered. Residues 609 to 621 (SRKKHDQLRRMAS) are compositionally biased toward basic residues. Positions 666-690 (LDNITKSLTAPNVNNYFVFCLKPND) are actin-binding. N-linked (GlcNAc...) asparagine glycosylation is present at asparagine 668. Positions 794 to 817 (GDIGSPSRPDTPGHNPFSDSKARL) are disordered. 2 helical membrane passes run 894 to 914 (WLAI…KWIG) and 929 to 949 (FAIN…IIVF). Residues 957-1016 (QNVYSAAELSAHDGKGKHSAYVAIRGQVFDLGAFMPNHYPKIIPQSSLKKYAGVDATGLF) form the Cytochrome b5 heme-binding domain. 2 N-linked (GlcNAc...) asparagine glycosylation sites follow: asparagine 1043 and asparagine 1068. Residues 1205 to 1225 (ILLAVSILLCSVIGFKFFAAL) form a helical membrane-spanning segment. N-linked (GlcNAc...) asparagine glycans are attached at residues asparagine 1462 and asparagine 1568. 3 helical membrane passes run 1599–1619 (LLST…IVLL), 1626–1646 (VPLT…IIFI), and 1653–1673 (MIGW…GLPL). Asparagine 1759 and asparagine 1790 each carry an N-linked (GlcNAc...) asparagine glycan. The 56-residue stretch at 1827 to 1882 (LPTDDMLLNEIRDILRTADLMTVTKKGIKQELERRFNVNLDMKRAYIGSATEAILS) folds into the DEK-C domain.

It in the N-terminal section; belongs to the TRAFAC class myosin-kinesin ATPase superfamily. Myosin family. The protein in the C-terminal section; belongs to the chitin synthase family. Class V subfamily. Post-translationally, maximal activity requires trypsin activation, suggesting a zymogenic nature.

The protein resides in the cell membrane. It localises to the membrane. It carries out the reaction [(1-&gt;4)-N-acetyl-beta-D-glucosaminyl](n) + UDP-N-acetyl-alpha-D-glucosamine = [(1-&gt;4)-N-acetyl-beta-D-glucosaminyl](n+1) + UDP + H(+). Functionally, polymerizes chitin, a structural polymer of the cell wall and septum, by transferring the sugar moiety of UDP-GlcNAc to the non-reducing end of the growing chitin polymer. CHS5 is required for the sustained growth at 37 degrees Celsius and is of critical importance for virulence. Especially important at infection temperatures for maintaining the cell wall integrity of developing yeast buds, elongating tips of hyphae, and random sites of expansion in sclerotic forms. The polypeptide is Chitin synthase 5 (Exophiala dermatitidis (Black yeast-like fungus)).